Here is an 821-residue protein sequence, read N- to C-terminus: Calpain-3 (821 aa).

Positions 1-37 are disordered; it reads MPTVISPTVAPRTGAEPRSPGPVPHPAQGKTTEAGGG. The region spanning 74–417 is the Calpain catalytic domain; that stretch reads LYLDPEFPPD…FTKLEICNLT (344 aa). Active-site residues include Cys-129, His-334, and Asn-358. A domain III region spans residues 418–586; sequence ADALESDKLQ…KRNLSEEAEN (169 aa). Positions 587 to 649 are linker; that stretch reads TISVDRPVKK…RPGHTDQESE (63 aa). Residues 603 to 651 form a disordered region; sequence IFVSDRANSNKELGVDQEAEEGKDKTGPDKQGESPQPRPGHTDQESEEQ. Basic and acidic residues predominate over residues 622-634; that stretch reads EEGKDKTGPDKQG. EF-hand domains are found at residues 649 to 683, 692 to 725, 722 to 757, and 787 to 821; these read EEQQQFRNIFRQIAGDDMEICADELKNVLNTVVNK, FTLESCRSMIALMDTDGSGRLNLQEFHHLWKKIK, KKIKAWQKIFKHYDTDHSGTINSYEMRNAVNDAGFH, and VRLEGMFRAFHAFDKDGDGIIKLNVLEWLQLTMYA. The domain IV stretch occupies residues 650 to 820; sequence EQQQFRNIFR…VLEWLQLTMY (171 aa). Ala-662, Asp-665, Glu-667, Glu-672, Asp-705, Asp-707, Ser-709, Arg-711, Glu-716, Asp-735, Asp-737, Ser-739, Thr-741, Glu-746, Asp-800, Asp-802, Asp-804, and Ile-806 together coordinate Ca(2+).

This sequence belongs to the peptidase C2 family. Homodimer; via EF-hand domain 4. Interacts with TTN/titin. Interacts with CMYA5; this interaction, which results in CMYA5 proteolysis, may protect CAPN3 from autolysis. Interacts with SIMC1. Interacts with UTP25; the interaction is required for CAPN3 translocation to the nucleolus. In terms of tissue distribution, skeletal muscle.

It is found in the cytoplasm. It localises to the nucleus. Its subcellular location is the nucleolus. The catalysed reaction is Broad endopeptidase activity.. With respect to regulation, activated by micromolar concentrations of calcium and inhibited by calpastatin. Its function is as follows. Calcium-regulated non-lysosomal thiol-protease. Proteolytically cleaves CTBP1 at 'His-399'. Mediates, with UTP25, the proteasome-independent degradation of p53/TP53. The sequence is that of Calpain-3 (Capn3) from Rattus norvegicus (Rat).